A 392-amino-acid chain; its full sequence is Anhydro-N-acetylmuramic acid kinase (392 aa).

Position 22–29 (Gly-22–Asp-29) interacts with ATP.

The protein belongs to the anhydro-N-acetylmuramic acid kinase family.

It catalyses the reaction 1,6-anhydro-N-acetyl-beta-muramate + ATP + H2O = N-acetyl-D-muramate 6-phosphate + ADP + H(+). It functions in the pathway amino-sugar metabolism; 1,6-anhydro-N-acetylmuramate degradation. The protein operates within cell wall biogenesis; peptidoglycan recycling. Its function is as follows. Catalyzes the specific phosphorylation of 1,6-anhydro-N-acetylmuramic acid (anhMurNAc) with the simultaneous cleavage of the 1,6-anhydro ring, generating MurNAc-6-P. Is required for the utilization of anhMurNAc either imported from the medium or derived from its own cell wall murein, and thus plays a role in cell wall recycling. This Burkholderia mallei (strain NCTC 10229) protein is Anhydro-N-acetylmuramic acid kinase.